Consider the following 725-residue polypeptide: Lipoamidase (725 aa).

Residues 1 to 52 (MLAQESILETTVQTETESVTTETSQTVANLESETTSQTVMQEKESSSAIAES) form a disordered region. The span at 9–27 (ETTVQTETESVTTETSQTV) shows a compositional bias: low complexity. Polar residues predominate over residues 28 to 40 (ANLESETTSQTVM). Catalysis depends on charge relay system residues Lys-159 and Ser-235. Ser-259 (acyl-ester intermediate) is an active-site residue. Positions 551 to 686 (KINQPHVEEP…NKSMIGKQEQ (136 aa)) are disordered. Over residues 556–637 (HVEEPDKDKE…TSEGPIEGKD (82 aa)) the composition is skewed to basic and acidic residues. Positions 650-661 (SGSSLDNSLNSS) are enriched in low complexity. The segment covering 662 to 679 (ANQGTKSTESTHAFSNKS) has biased composition (polar residues). The helical transmembrane segment at 700-720 (PSTFWIVLGGAFLVTSGTIYI) threads the bilayer.

The protein belongs to the amidase family. In terms of assembly, homodimer in solution.

The protein resides in the cell membrane. The catalysed reaction is N(6)-[(R)-lipoyl]-L-lysyl-[lipoyl-carrier protein] + H2O = L-lysyl-[lipoyl-carrier protein] + (R)-lipoate. Lipoamidase activity is slightly inhibited by p-chloromercuribenzoate. Its function is as follows. Amidohydrolase that releases lipoic acid from the protein-bound form. Cleaves the amide bond that links lipoic acid to the lipoylated lysine epsilon-amino groups, leading to the formation of free lipoic acid plus the unmodified protein. Shows activity toward both high molecular weight protein substrates such as a lipoyl domain and intact 2-oxoacid dehydrogenases as well as small molecule substrates such as lipoyl-lysine. Also acts on small biotinylated substrates. Hydrolyzes the synthetic substrates methyl lipoate and lipoamide. The physiologically important substrates are probably lipoyl-lysine and small peptides containing lipoyl-lysine. Lpa seems likely to enable this bacterium to utilize amide-linked forms of lipoic acid that otherwise could not be assimilated. This chain is Lipoamidase, found in Enterococcus faecalis (Streptococcus faecalis).